Reading from the N-terminus, the 336-residue chain is Nicotinate-nucleotide--dimethylbenzimidazole phosphoribosyltransferase (336 aa).

The disordered stretch occupies residues 20-41 (GPDAAARAGAEERNGQLTKPPG). The active-site Proton acceptor is the Glu-304.

This sequence belongs to the CobT family.

The enzyme catalyses 5,6-dimethylbenzimidazole + nicotinate beta-D-ribonucleotide = alpha-ribazole 5'-phosphate + nicotinate + H(+). The protein operates within nucleoside biosynthesis; alpha-ribazole biosynthesis; alpha-ribazole from 5,6-dimethylbenzimidazole: step 1/2. Catalyzes the synthesis of alpha-ribazole-5'-phosphate from nicotinate mononucleotide (NAMN) and 5,6-dimethylbenzimidazole (DMB). The chain is Nicotinate-nucleotide--dimethylbenzimidazole phosphoribosyltransferase from Ruegeria pomeroyi (strain ATCC 700808 / DSM 15171 / DSS-3) (Silicibacter pomeroyi).